The chain runs to 37 residues: Large ribosomal subunit protein bL36 (37 aa).

It belongs to the bacterial ribosomal protein bL36 family.

The chain is Large ribosomal subunit protein bL36 from Alkaliphilus metalliredigens (strain QYMF).